A 443-amino-acid chain; its full sequence is 23S rRNA (uracil(1939)-C(5))-methyltransferase RlmD (443 aa).

Residues 10–68 (RVTTKQTLTVTVNSLDPFGQGVAHHQGKAIFIPGALPGEQAEIELTEQKRQYSRGKLKR) enclose the TRAM domain. Residues C81, C87, C90, and C168 each contribute to the [4Fe-4S] cluster site. 6 residues coordinate S-adenosyl-L-methionine: Q271, F300, N305, E321, N348, and D369. Residue C395 is the Nucleophile of the active site.

It belongs to the class I-like SAM-binding methyltransferase superfamily. RNA M5U methyltransferase family. RlmD subfamily.

The enzyme catalyses uridine(1939) in 23S rRNA + S-adenosyl-L-methionine = 5-methyluridine(1939) in 23S rRNA + S-adenosyl-L-homocysteine + H(+). Functionally, catalyzes the formation of 5-methyl-uridine at position 1939 (m5U1939) in 23S rRNA. This is 23S rRNA (uracil(1939)-C(5))-methyltransferase RlmD from Yersinia enterocolitica serotype O:8 / biotype 1B (strain NCTC 13174 / 8081).